The following is a 499-amino-acid chain: Probable cytosol aminopeptidase (499 aa).

2 residues coordinate Mn(2+): Lys-263 and Asp-268. The active site involves Lys-275. Mn(2+) contacts are provided by Asp-286, Asp-345, and Glu-347. The active site involves Arg-349.

It belongs to the peptidase M17 family. Mn(2+) is required as a cofactor.

It is found in the cytoplasm. The enzyme catalyses Release of an N-terminal amino acid, Xaa-|-Yaa-, in which Xaa is preferably Leu, but may be other amino acids including Pro although not Arg or Lys, and Yaa may be Pro. Amino acid amides and methyl esters are also readily hydrolyzed, but rates on arylamides are exceedingly low.. It catalyses the reaction Release of an N-terminal amino acid, preferentially leucine, but not glutamic or aspartic acids.. Its function is as follows. Presumably involved in the processing and regular turnover of intracellular proteins. Catalyzes the removal of unsubstituted N-terminal amino acids from various peptides. The protein is Probable cytosol aminopeptidase of Chlamydia caviae (strain ATCC VR-813 / DSM 19441 / 03DC25 / GPIC) (Chlamydophila caviae).